The chain runs to 1332 residues: Delta-poly-L-ornithine synthetase (1332 aa).

L-ornithine is bound by residues D217, E221, and T304. Residues E221, T304, G306, and T308 each contribute to the D-ornithine site. L-ornithine contacts are provided by V312 and S313. S313 is a binding site for D-ornithine. The region spanning Q524–P601 is the Carrier domain. S560 bears the O-(pantetheine 4'-phosphoryl)serine mark. Transmembrane regions (helical) follow at residues L629–T649, A664–I684, V868–V888, L908–I928, I1120–D1140, and L1151–L1171.

The protein belongs to the ATP-dependent AMP-binding enzyme family. Pantetheine 4'-phosphate is required as a cofactor.

The protein resides in the cell membrane. It carries out the reaction n L-ornithine + n ATP + H2O = N(5)-(L-ornithyl)-[N(5)-(L-ornithyl)]n-1 + n AMP + n diphosphate + n H(+). The catalysed reaction is n D-ornithine + n ATP + H2O = N(5)-(D-ornithyl)-[N(5)-(D-ornithyl)]n-1 + n AMP + n diphosphate + n H(+). Its function is as follows. Catalyzes the polymerization of L-ornithine, generating poly-L-ornithine composed of 7-12 amino acid units joined via isopeptide bonds between the carboxylate and the side chain amine. This polymer exhibits potent antifungal activity and thus may have a potential role in survival benefit for A.baumannii. The reaction occurs via ATP-dependent adenylation of the substrate. Can also adenylate D-ornithine with similar efficiency and thus may produce D-ornithine polymers. This chain is Delta-poly-L-ornithine synthetase, found in Acinetobacter baumannii (strain AB307-0294).